A 380-amino-acid polypeptide reads, in one-letter code: Cytochrome b (380 aa).

Transmembrane regions (helical) follow at residues 33–53, 77–98, 113–133, and 178–198; these read FGSLLGLCLIVQILTGLFLAM, WLIRYMHANGASMFFICLFLHV, WNMGIVLLFAVMATAFMGYVL, and FFAFHFILPFIITALVLVHLL. Residues His83 and His97 each contribute to the heme site. The heme site is built by His182 and His196. An a ubiquinone-binding site is contributed by His201. Transmembrane regions (helical) follow at residues 226–246, 288–308, 320–340, and 347–367; these read VKDFLGVLILLMAFMILTLFF, LGGVLALILSIVILAFMPLLH, ITQTMYWILVADLLVLTWIGG, and FIIIGQTASIAYFTIIVIFMP.

The protein belongs to the cytochrome b family. In terms of assembly, the cytochrome bc1 complex contains 11 subunits: 3 respiratory subunits (MT-CYB, CYC1 and UQCRFS1), 2 core proteins (UQCRC1 and UQCRC2) and 6 low-molecular weight proteins (UQCRH/QCR6, UQCRB/QCR7, UQCRQ/QCR8, UQCR10/QCR9, UQCR11/QCR10 and a cleavage product of UQCRFS1). This cytochrome bc1 complex then forms a dimer. Heme is required as a cofactor.

It localises to the mitochondrion inner membrane. Its function is as follows. Component of the ubiquinol-cytochrome c reductase complex (complex III or cytochrome b-c1 complex) that is part of the mitochondrial respiratory chain. The b-c1 complex mediates electron transfer from ubiquinol to cytochrome c. Contributes to the generation of a proton gradient across the mitochondrial membrane that is then used for ATP synthesis. The protein is Cytochrome b (MT-CYB) of Microtus arvalis (Common vole).